The chain runs to 312 residues: Probable myosin light chain kinase DDB_G0282429 (312 aa).

The interval 1 to 28 is disordered; that stretch reads MDRMDSSDEEIDNISDDELQSGDEIEVE. A compositionally biased stretch (acidic residues) spans 7 to 27; it reads SDEEIDNISDDELQSGDEIEV. A Protein kinase domain is found at 38–290; sequence YILGNEIGRG…FEQCLIHPWV (253 aa). ATP contacts are provided by residues 44–52 and Lys67; that span reads IGRGAFSIV. The Proton acceptor role is filled by Asp158.

The protein belongs to the protein kinase superfamily. CAMK Ser/Thr protein kinase family. CaMK subfamily.

The enzyme catalyses L-seryl-[myosin light chain] + ATP = O-phospho-L-seryl-[myosin light chain] + ADP + H(+). The catalysed reaction is L-threonyl-[myosin light chain] + ATP = O-phospho-L-threonyl-[myosin light chain] + ADP + H(+). Does not have a calmodulin-binding domain. In terms of biological role, may phosphorylate a specific serine in the N-terminus of a myosin light chain. This Dictyostelium discoideum (Social amoeba) protein is Probable myosin light chain kinase DDB_G0282429.